A 361-amino-acid chain; its full sequence is Peptide chain release factor 1 (361 aa).

Position 237 is an N5-methylglutamine (Q237). Residues 284 to 296 are compositionally biased toward basic and acidic residues; sequence EDEKRRSEEDSTR. The disordered stretch occupies residues 284–305; the sequence is EDEKRRSEEDSTRRNLVSSGDR.

The protein belongs to the prokaryotic/mitochondrial release factor family. In terms of processing, methylated by PrmC. Methylation increases the termination efficiency of RF1.

It is found in the cytoplasm. Functionally, peptide chain release factor 1 directs the termination of translation in response to the peptide chain termination codons UAG and UAA. The sequence is that of Peptide chain release factor 1 from Shewanella piezotolerans (strain WP3 / JCM 13877).